The following is a 206-amino-acid chain: Type III pantothenate kinase (206 aa).

Position 5–12 (5–12 (DIGNSTAK)) interacts with ATP. Substrate contacts are provided by residues tyrosine 67 and 72–75 (GVDR). Aspartate 74 functions as the Proton acceptor in the catalytic mechanism. Residue aspartate 89 coordinates K(+). Residue serine 92 participates in ATP binding. A substrate-binding site is contributed by threonine 144.

Belongs to the type III pantothenate kinase family. As to quaternary structure, homodimer. The cofactor is NH4(+). K(+) is required as a cofactor.

It localises to the cytoplasm. The catalysed reaction is (R)-pantothenate + ATP = (R)-4'-phosphopantothenate + ADP + H(+). The protein operates within cofactor biosynthesis; coenzyme A biosynthesis; CoA from (R)-pantothenate: step 1/5. In terms of biological role, catalyzes the phosphorylation of pantothenate (Pan), the first step in CoA biosynthesis. This chain is Type III pantothenate kinase, found in Campylobacter hominis (strain ATCC BAA-381 / DSM 21671 / CCUG 45161 / LMG 19568 / NCTC 13146 / CH001A).